The primary structure comprises 217 residues: Killer cell lectin-like receptor subfamily B member 1F (217 aa).

The Cytoplasmic portion of the chain corresponds to 1–45; that stretch reads MDTSKVHGNVKPFRCPGYKQASSPSFSPDACRCPHWHHLALKSGC. An LCK-binding motif motif is present at residues 31-34; it reads CRCP. The chain crosses the membrane as a helical; Signal-anchor for type II membrane protein span at residues 46-66; that stretch reads AGLILLLLSLIGLSVLVRFLV. Residues 67-217 are Extracellular-facing; it reads QKPPIEKCSV…WICQKTLIHV (151 aa). Residue asparagine 81 is glycosylated (N-linked (GlcNAc...) asparagine). The C-type lectin domain maps to 101–211; the sequence is HWNKCLFVSQ…CSSDNHWICQ (111 aa). 2 disulfide bridges follow: cysteine 122-cysteine 210 and cysteine 189-cysteine 202.

Highly expressed in dendritic cells. Detectable in natural killer cells.

The protein localises to the membrane. Functionally, binds CLEC2I/Clr-g leading to activation of natural killer cells or costimulation of IL-2 production and proliferation of T-cells in response to antigen stimulation. May contribute to the formation of the immunological synapse between T-cells and antigen-presenting dendritic cells. The chain is Killer cell lectin-like receptor subfamily B member 1F (Klrb1f) from Mus musculus (Mouse).